The sequence spans 549 residues: DNA mismatch repair protein MutL (549 aa).

This sequence belongs to the DNA mismatch repair MutL/HexB family.

This protein is involved in the repair of mismatches in DNA. It is required for dam-dependent methyl-directed DNA mismatch repair. May act as a 'molecular matchmaker', a protein that promotes the formation of a stable complex between two or more DNA-binding proteins in an ATP-dependent manner without itself being part of a final effector complex. In Pseudothermotoga lettingae (strain ATCC BAA-301 / DSM 14385 / NBRC 107922 / TMO) (Thermotoga lettingae), this protein is DNA mismatch repair protein MutL.